A 32-amino-acid polypeptide reads, in one-letter code: Calcitonin (32 aa).

A disulfide bridge connects residues cysteine 1 and cysteine 7. Proline 32 carries the proline amide modification.

This sequence belongs to the calcitonin family.

It is found in the secreted. In terms of biological role, calcitonin is a peptide hormone that causes a rapid but short-lived drop in the level of calcium and phosphate in blood by promoting the incorporation of those ions in the bones. Calcitonin function is mediated by the calcitonin receptor/CALCR and the CALCR-RAMP2 (AMYR2) receptor complex. The chain is Calcitonin (CALCA) from Sus scrofa (Pig).